Reading from the N-terminus, the 86-residue chain is Putative defensin-like protein 189 (86 aa).

Positions 1–28 (MKMAKSANEIGFITCLVVFLVLTGQSNG) are cleaved as a signal peptide. 4 disulfides stabilise this stretch: C39–C85, C52–C71, C57–C80, and C61–C82.

It belongs to the DEFL family.

It localises to the secreted. The sequence is that of Putative defensin-like protein 189 from Arabidopsis thaliana (Mouse-ear cress).